A 1413-amino-acid polypeptide reads, in one-letter code: DNA-directed RNA polymerase subunit beta' (1413 aa).

4 residues coordinate Zn(2+): Cys70, Cys72, Cys85, and Cys88. Positions 460, 462, and 464 each coordinate Mg(2+). Zn(2+) contacts are provided by Cys819, Cys893, Cys900, and Cys903.

Belongs to the RNA polymerase beta' chain family. In terms of assembly, the RNAP catalytic core consists of 2 alpha, 1 beta, 1 beta' and 1 omega subunit. When a sigma factor is associated with the core the holoenzyme is formed, which can initiate transcription. Requires Mg(2+) as cofactor. It depends on Zn(2+) as a cofactor.

The enzyme catalyses RNA(n) + a ribonucleoside 5'-triphosphate = RNA(n+1) + diphosphate. In terms of biological role, DNA-dependent RNA polymerase catalyzes the transcription of DNA into RNA using the four ribonucleoside triphosphates as substrates. The sequence is that of DNA-directed RNA polymerase subunit beta' from Burkholderia ambifaria (strain MC40-6).